The primary structure comprises 1040 residues: Contactin-2 (1040 aa).

The signal sequence occupies residues 1 to 30 (MGAPARKRASLLLLLLATMALVSSPGWSFS). 6 Ig-like C2-type domains span residues 39–130 (PVFE…AVLR), 135–224 (QEFS…SVFS), 241–324 (PSIK…GRII), 329–413 (PEWL…AELA), 419–506 (PDFR…GILS), and 511–605 (TKIT…ATVL). 4 disulfides stabilise this stretch: cysteine 63-cysteine 113, cysteine 157-cysteine 209, cysteine 263-cysteine 308, and cysteine 350-cysteine 397. Residues asparagine 78, asparagine 200, and asparagine 206 are each glycosylated (N-linked (GlcNAc...) asparagine). Asparagine 463, asparagine 479, asparagine 500, and asparagine 527 each carry an N-linked (GlcNAc...) asparagine glycan. 4 consecutive Fibronectin type-III domains span residues 612–710 (PPGG…TKEA), 715–812 (APSG…SAEE), 817–913 (APAK…MKPP), and 917–1008 (PPGN…NGGT). N-linked (GlcNAc...) asparagine glycosylation is present at asparagine 777. Residues 796–798 (RGD) carry the Cell attachment site motif. Residues asparagine 832, asparagine 920, and asparagine 942 are each glycosylated (N-linked (GlcNAc...) asparagine). Residues 897–922 (GTGPASPSADAMTMKPPPRRPPGNIS) form a disordered region. A lipid anchor (GPI-anchor amidated serine) is attached at serine 1014. A propeptide spans 1015 to 1040 (SAVRPAHPGPVFSCMVILMLAGCQRL) (removed in mature form).

It belongs to the immunoglobulin superfamily. Contactin family.

The protein resides in the cell membrane. Its function is as follows. In conjunction with another transmembrane protein, CNTNAP2, contributes to the organization of axonal domains at nodes of Ranvier by maintaining voltage-gated potassium channels at the juxtaparanodal region. In Mus musculus (Mouse), this protein is Contactin-2 (Cntn2).